Consider the following 190-residue polypeptide: Corticoliberin (190 aa).

Residues 1-24 form the signal peptide; sequence MRLRLLVSVGVLLVALLPSPPCRA. The propeptide occupies 25 to 147; the sequence is LLSRGPIPGA…QEAPAARKRR (123 aa). Disordered regions lie at residues 33 to 57 and 116 to 151; these read GARQASQHPQPLSFFQPPPQPQEPQ and RRPFDSPAGPAERGTENALGSRQEAPAARKRRSQEP. The residue at position 188 (alanine 188) is an Alanine amide.

Belongs to the sauvagine/corticotropin-releasing factor/urotensin I family. As to quaternary structure, interacts (via C-terminus) with CRFR1 (via N-terminal extracellular domain). Produced by the hypothalamus.

Its subcellular location is the secreted. Functionally, hormone regulating the release of corticotropin from pituitary gland. Induces NLRP6 in intestinal epithelial cells, hence may influence gut microbiota profile. This is Corticoliberin (CRH) from Bos taurus (Bovine).